A 186-amino-acid chain; its full sequence is Elongation factor P (186 aa).

The protein belongs to the elongation factor P family.

The protein resides in the cytoplasm. It participates in protein biosynthesis; polypeptide chain elongation. Involved in peptide bond synthesis. Stimulates efficient translation and peptide-bond synthesis on native or reconstituted 70S ribosomes in vitro. Probably functions indirectly by altering the affinity of the ribosome for aminoacyl-tRNA, thus increasing their reactivity as acceptors for peptidyl transferase. The protein is Elongation factor P of Shewanella sp. (strain ANA-3).